The chain runs to 171 residues: Large ribosomal subunit protein bL9 (171 aa).

This sequence belongs to the bacterial ribosomal protein bL9 family.

Its function is as follows. Binds to the 23S rRNA. The chain is Large ribosomal subunit protein bL9 from Rickettsia akari (strain Hartford).